The chain runs to 331 residues: MSADTDTDTDTGTGTGPDTDTGTAAVVERLRGGMARGVLSFPLTSFHDDGSLDLDGFRAHLETQLAAGPGAVFPACGTGEFFSLDEDEYRQVVTAAVELTAGRVPVVAGTGYGWAQAARFARIAEDAGADALLVLPHYLVAAPQDGLVGQLERLAERTRLPLIAYQRGQVTYSVESLRRIARIPGVVGLKDGHSDLDRLQRLTLAAPEGFLFFNGAATAEIQARAYAAVGVPAYSSAVHAFAPEIAGAFHAALRDGHGKAVEKLLREFYVPFVELRDRVPGYGVSLVKAAARLRGRPVGPVRAPLTDPSAADLADLTSLLSTGLDLVGAAL.

Residues 1–23 (MSADTDTDTDTGTGTGPDTDTGT) form a disordered region. A compositionally biased stretch (low complexity) spans 10–23 (DTGTGTGPDTDTGT).

Belongs to the DapA family.

The enzyme catalyses 5-dehydro-4-deoxy-D-glucarate + H(+) = 2,5-dioxopentanoate + CO2 + H2O. It participates in carbohydrate acid metabolism; D-glucarate degradation; 2,5-dioxopentanoate from D-glucarate: step 2/2. This is Probable 5-dehydro-4-deoxyglucarate dehydratase 2 from Streptomyces avermitilis (strain ATCC 31267 / DSM 46492 / JCM 5070 / NBRC 14893 / NCIMB 12804 / NRRL 8165 / MA-4680).